The chain runs to 192 residues: SRP-independent targeting protein 2 homolog (192 aa).

2 consecutive transmembrane segments (helical) span residues 16–36 (ILTFMLAADLIVNVLFWILRF) and 102–122 (WILIFLAALTSVKVFAFYLLV). Positions 149–192 (LNQPPQQQQQQQQQQHQQHATPSEPVLSKRQQKLRKKAAKYSRP) are disordered. Low complexity predominate over residues 151-167 (QPPQQQQQQQQQQHQQH). The span at 178-192 (RQQKLRKKAAKYSRP) shows a compositional bias: basic residues.

Belongs to the TMEM208 family.

It localises to the endoplasmic reticulum membrane. May function in a SRP (signal recognition particle) and GET (guided entry of tail-anchored proteins) independent pathway for targeting a broad range of substrate proteins to the endoplasmic reticulum. Has a role in meiosis. The polypeptide is SRP-independent targeting protein 2 homolog (Schizosaccharomyces pombe (strain 972 / ATCC 24843) (Fission yeast)).